Here is a 131-residue protein sequence, read N- to C-terminus: Profilin (131 aa).

The protein belongs to the profilin family. In terms of assembly, occurs in many kinds of cells as a complex with monomeric actin in a 1:1 ratio.

The protein resides in the cytoplasm. Its subcellular location is the cytoskeleton. Its function is as follows. Binds to actin and affects the structure of the cytoskeleton. At high concentrations, profilin prevents the polymerization of actin, whereas it enhances it at low concentrations. By binding to PIP2, it inhibits the formation of IP3 and DG. This chain is Profilin, found in Citrus sinensis (Sweet orange).